Consider the following 406-residue polypeptide: Phosphorylase b kinase gamma catalytic chain, liver/testis isoform (406 aa).

Residues 24-291 enclose the Protein kinase domain; sequence YDPKDVIGRG…AEQALQHPFF (268 aa). ATP is bound by residues 30–38 and K53; that span reads IGRGVSSVV. Catalysis depends on D153, which acts as the Proton acceptor. The interval 306–330 is calmodulin-binding (domain-N); sequence QRFRVAVWTVLAAGRVALSAHRIRP. The segment at 346-370 is calmodulin-binding (domain-C); sequence VRRLIDNCAFRLYGHWVKKGEQQNR.

The protein belongs to the protein kinase superfamily. CAMK Ser/Thr protein kinase family. Hexadecamer of 4 heterotetramers, each composed of alpha, beta, gamma, and delta subunits. Alpha (PHKA1 or PHKA2) and beta (PHKB) are regulatory subunits, gamma (PHKG1 or PHKG2) is the catalytic subunit, and delta is calmodulin.

It carries out the reaction 2 ATP + phosphorylase b = 2 ADP + phosphorylase a.. Its function is as follows. Catalytic subunit of the phosphorylase b kinase (PHK), which mediates the neural and hormonal regulation of glycogen breakdown (glycogenolysis) by phosphorylating and thereby activating glycogen phosphorylase. May regulate glycogeneolysis in the testis. In vitro, phosphorylates PYGM. This Bos taurus (Bovine) protein is Phosphorylase b kinase gamma catalytic chain, liver/testis isoform (PHKG2).